The sequence spans 509 residues: Cobyric acid synthase (509 aa).

One can recognise a GATase cobBQ-type domain in the interval 262–459 (EIKVGIIKLP…IHGIFENDNW (198 aa)). The active-site Nucleophile is the cysteine 343. The active site involves histidine 451.

The protein belongs to the CobB/CobQ family. CobQ subfamily.

The protein operates within cofactor biosynthesis; adenosylcobalamin biosynthesis. Functionally, catalyzes amidations at positions B, D, E, and G on adenosylcobyrinic A,C-diamide. NH(2) groups are provided by glutamine, and one molecule of ATP is hydrogenolyzed for each amidation. This Prochlorococcus marinus (strain AS9601) protein is Cobyric acid synthase.